A 202-amino-acid polypeptide reads, in one-letter code: Methylthioribulose-1-phosphate dehydratase (202 aa).

Zn(2+) is bound by residues histidine 93 and histidine 95.

It belongs to the aldolase class II family. MtnB subfamily. It depends on Zn(2+) as a cofactor.

It carries out the reaction 5-(methylsulfanyl)-D-ribulose 1-phosphate = 5-methylsulfanyl-2,3-dioxopentyl phosphate + H2O. It participates in amino-acid biosynthesis; L-methionine biosynthesis via salvage pathway; L-methionine from S-methyl-5-thio-alpha-D-ribose 1-phosphate: step 2/6. Functionally, catalyzes the dehydration of methylthioribulose-1-phosphate (MTRu-1-P) into 2,3-diketo-5-methylthiopentyl-1-phosphate (DK-MTP-1-P). This is Methylthioribulose-1-phosphate dehydratase from Klebsiella pneumoniae subsp. pneumoniae (strain ATCC 700721 / MGH 78578).